Reading from the N-terminus, the 153-residue chain is Vasotocin-neurophysin VT 1 (153 aa).

The signal sequence occupies residues 1–19 (MPQCALLLSLLGLLALSSA). A disulfide bond links cysteine 20 and cysteine 25. Glycine 28 is subject to Glycine amide. Disulfide bonds link cysteine 41/cysteine 85, cysteine 44/cysteine 58, cysteine 52/cysteine 75, cysteine 59/cysteine 65, cysteine 92/cysteine 105, cysteine 99/cysteine 117, and cysteine 106/cysteine 111.

The protein belongs to the vasopressin/oxytocin family. Post-translationally, seven disulfide bonds are present in neurophysin.

The protein localises to the secreted. Vasotocin is probably an antidiuretic hormone. The protein is Vasotocin-neurophysin VT 1 of Takifugu rubripes (Japanese pufferfish).